Here is a 286-residue protein sequence, read N- to C-terminus: Lipid phosphate phosphatase epsilon 2, chloroplastic (286 aa).

Residues 1-60 constitute a chloroplast transit peptide; sequence MAASSSSLLLLHKPTYNFHFAASSVPTYINSARFRISSSIFPLDRRRRRRIWSVSGFKSM. The next 5 membrane-spanning stretches (helical) occupy residues 133–149, 173–193, 194–214, 226–246, and 260–280; these read LWAV…SVAL, AQSI…WLGT, NVLS…FTWL, VVVG…TWNS, and IALF…VLLN.

It belongs to the PA-phosphatase related phosphoesterase family. As to expression, expressed in root tips, root branch points, cotyledons and leaves.

The protein resides in the plastid. It is found in the chloroplast inner membrane. With respect to regulation, inhibited by Mg(2+). Exhibits phosphatidate phosphatase (PAP) activity in vitro. May play a secondary role as PAP in plastids. The sequence is that of Lipid phosphate phosphatase epsilon 2, chloroplastic (LPPE2) from Arabidopsis thaliana (Mouse-ear cress).